The primary structure comprises 265 residues: Small ribosomal subunit protein uS2 (265 aa).

This sequence belongs to the universal ribosomal protein uS2 family.

In Microcystis aeruginosa (strain NIES-843 / IAM M-2473), this protein is Small ribosomal subunit protein uS2.